Reading from the N-terminus, the 355-residue chain is Uroporphyrinogen decarboxylase (355 aa).

Substrate contacts are provided by residues 27 to 31 (RQAGR), Asp-77, Tyr-154, Thr-209, and His-328.

The protein belongs to the uroporphyrinogen decarboxylase family. As to quaternary structure, homodimer.

The protein resides in the cytoplasm. The enzyme catalyses uroporphyrinogen III + 4 H(+) = coproporphyrinogen III + 4 CO2. Its pathway is porphyrin-containing compound metabolism; protoporphyrin-IX biosynthesis; coproporphyrinogen-III from 5-aminolevulinate: step 4/4. Catalyzes the decarboxylation of four acetate groups of uroporphyrinogen-III to yield coproporphyrinogen-III. This Aliivibrio fischeri (strain ATCC 700601 / ES114) (Vibrio fischeri) protein is Uroporphyrinogen decarboxylase.